The chain runs to 115 residues: Putative gamma-glutamylcyclotransferase VC_2546 (115 aa).

8-11 is a binding site for substrate; the sequence is YGTL. Catalysis depends on Glu73, which acts as the Proton acceptor.

It belongs to the gamma-glutamylcyclotransferase family.

Functionally, putative gamma-glutamylcyclotransferase. The sequence is that of Putative gamma-glutamylcyclotransferase VC_2546 from Vibrio cholerae serotype O1 (strain ATCC 39315 / El Tor Inaba N16961).